The sequence spans 80 residues: MAKKAPAAPAFEQALSELEQIVVRLESGDLPLEEALSEFERGIRLARQGQQTLQQAEQRVKILLSDDQDAPLSPFNAEQE.

This sequence belongs to the XseB family. As to quaternary structure, heterooligomer composed of large and small subunits.

The protein resides in the cytoplasm. The catalysed reaction is Exonucleolytic cleavage in either 5'- to 3'- or 3'- to 5'-direction to yield nucleoside 5'-phosphates.. In terms of biological role, bidirectionally degrades single-stranded DNA into large acid-insoluble oligonucleotides, which are then degraded further into small acid-soluble oligonucleotides. This Edwardsiella ictaluri (strain 93-146) protein is Exodeoxyribonuclease 7 small subunit.